We begin with the raw amino-acid sequence, 911 residues long: DNA mismatch repair protein MutS (911 aa).

G660 to S667 lines the ATP pocket.

Belongs to the DNA mismatch repair MutS family.

Functionally, this protein is involved in the repair of mismatches in DNA. It is possible that it carries out the mismatch recognition step. This protein has a weak ATPase activity. The chain is DNA mismatch repair protein MutS from Rhodopseudomonas palustris (strain HaA2).